Here is a 953-residue protein sequence, read N- to C-terminus: Protein translocase subunit SecA 1 (953 aa).

Residues Gln-83, 101–105 (GEGKT), and Asp-490 contribute to the ATP site. Residues 854 to 867 (AAAAAAKASDSAAK) are compositionally biased toward low complexity. The tract at residues 854 to 953 (AAAAAAKASD…DRPAKSHRKG (100 aa)) is disordered. A compositionally biased stretch (basic and acidic residues) spans 929 to 947 (SRRERREAARKQAKADRPA).

Belongs to the SecA family. Monomer and homodimer. Part of the essential Sec protein translocation apparatus which comprises SecA, SecYEG and auxiliary proteins SecDF. Other proteins may also be involved.

It is found in the cell membrane. The protein resides in the cytoplasm. It carries out the reaction ATP + H2O + cellular proteinSide 1 = ADP + phosphate + cellular proteinSide 2.. Functionally, part of the Sec protein translocase complex. Interacts with the SecYEG preprotein conducting channel. Has a central role in coupling the hydrolysis of ATP to the transfer of proteins into and across the cell membrane, serving as an ATP-driven molecular motor driving the stepwise translocation of polypeptide chains across the membrane. The protein is Protein translocase subunit SecA 1 of Mycolicibacterium smegmatis (strain ATCC 700084 / mc(2)155) (Mycobacterium smegmatis).